Consider the following 490-residue polypeptide: Ribosome biogenesis protein YTM1 (490 aa).

Residues 1-22 (MDGLEDGPLDASTATSQKPQRQ) form a disordered region. The interval 23 to 104 (VRLKLTSRHE…ETTLDVEYVR (82 aa)) is ubiquitin-like (UBL) domain. WD repeat units follow at residues 116-168 (LHDD…IALS), 175-213 (GHTASVKCARMVSPSQIISSGLDRTVRLWKYTESEDGFS), 224-263 (GHKGSVDSISMHAQSHRILSASADHSVGFWSTRKSENPAA), 298-338 (SHTA…LVDT), 340-379 (TASHSLLSVSHMPELSLLASGTSARHITLIDPRASATTVS), 385-425 (GHTN…TDKD), and 449-487 (GEGVKVFDVCWDKSVGIVSSGEDKMIQINRGEGVLPNGG). The segment at 255-286 (TRKSENPAAPESLLPSNTSRSSKRRKLNSSVS) is disordered.

Belongs to the WD repeat WDR12/YTM1 family. Component of the NOP7 complex, composed of ERB1, NOP7 and YTM1. The complex is held together by ERB1, which interacts with NOP7 via its N-terminal domain and with YTM1 via a high-affinity interaction between the seven-bladed beta-propeller domains of the 2 proteins. The NOP7 complex associates with the 66S pre-ribosome. Interacts (via UBL domain) with MDN1 (via VWFA/MIDAS domain).

The protein resides in the nucleus. It is found in the nucleolus. The protein localises to the nucleoplasm. Its function is as follows. Component of the NOP7 complex, which is required for maturation of the 25S and 5.8S ribosomal RNAs and formation of the 60S ribosome. This is Ribosome biogenesis protein YTM1 from Ajellomyces capsulatus (strain NAm1 / WU24) (Darling's disease fungus).